Consider the following 218-residue polypeptide: Glycerol-3-phosphate acyltransferase (218 aa).

A run of 5 helical transmembrane segments spans residues 5–25 (ALGM…ILIC), 53–73 (LAAA…VWLA), 80–100 (PFYL…PVFF), 115–135 (IAAI…LTVL), and 138–158 (GYSS…VWWF).

Belongs to the PlsY family. In terms of assembly, probably interacts with PlsX.

Its subcellular location is the cell inner membrane. It catalyses the reaction an acyl phosphate + sn-glycerol 3-phosphate = a 1-acyl-sn-glycero-3-phosphate + phosphate. It participates in lipid metabolism; phospholipid metabolism. Catalyzes the transfer of an acyl group from acyl-phosphate (acyl-PO(4)) to glycerol-3-phosphate (G3P) to form lysophosphatidic acid (LPA). This enzyme utilizes acyl-phosphate as fatty acyl donor, but not acyl-CoA or acyl-ACP. This chain is Glycerol-3-phosphate acyltransferase, found in Proteus mirabilis (strain HI4320).